We begin with the raw amino-acid sequence, 566 residues long: Oxygen-dependent choline dehydrogenase (566 aa).

FAD is bound at residue 7–36; it reads DYIICGAGSAGNVLATRLTEDPDVTVLLLE. Residues 180-202 are disordered; it reads NGYQQEGFGPMDRTVTPKGRRAS. The active-site Proton acceptor is the histidine 474.

The protein belongs to the GMC oxidoreductase family. FAD is required as a cofactor.

It carries out the reaction choline + A = betaine aldehyde + AH2. It catalyses the reaction betaine aldehyde + NAD(+) + H2O = glycine betaine + NADH + 2 H(+). The protein operates within amine and polyamine biosynthesis; betaine biosynthesis via choline pathway; betaine aldehyde from choline (cytochrome c reductase route): step 1/1. In terms of biological role, involved in the biosynthesis of the osmoprotectant glycine betaine. Catalyzes the oxidation of choline to betaine aldehyde and betaine aldehyde to glycine betaine at the same rate. The chain is Oxygen-dependent choline dehydrogenase from Burkholderia orbicola (strain MC0-3).